Reading from the N-terminus, the 254-residue chain is MCIAGKNIIFVAGLGGIGLDTNREIVKSGPKNLVILDRIENPAAIAELQAINPNVTVSFYPYDVTVALAESVKLLKTIFAKLKTVDLLVNGAGILDDHQIERTIAVNFTGTVNTTTAIMEFWDKRKGGPGGVIANICSVTGFNSIYQVPVYSASKAAALSFTSSLARLAPITGVTVYSINPGITDTTLVHKFNSWLDVEPRVAEKLLAFPTQTSLACAKNFVRAIEANKNGAIWKLDLNRLDEIEWTKHWDSGI.

10–33 (FVAGLGGIGLDTNREIVKSGPKNL) provides a ligand contact to NAD(+). Position 138 (Ser-138) interacts with substrate. The active-site Proton acceptor is Tyr-151.

It belongs to the short-chain dehydrogenases/reductases (SDR) family. As to quaternary structure, homodimer.

It catalyses the reaction a primary alcohol + NAD(+) = an aldehyde + NADH + H(+). The enzyme catalyses a secondary alcohol + NAD(+) = a ketone + NADH + H(+). The polypeptide is Alcohol dehydrogenase (Adh) (Scaptomyza albovittata (Fruit fly)).